Here is a 3122-residue protein sequence, read N- to C-terminus: Laminin subunit alpha-2 (3122 aa).

Positions Met1–Ala22 are cleaved as a signal peptide. A Laminin N-terminal domain is found at Gln35 to Met286. N-linked (GlcNAc...) asparagine glycosylation is found at Asn55 and Asn89. Cystine bridges form between Cys287–Cys296, Cys289–Cys307, Cys309–Cys318, Cys321–Cys341, Cys344–Cys353, and Cys346–Cys378. Laminin EGF-like domains are found at residues Cys287–Ala343, Cys344–Pro413, Cys414–Ala468, and Cys469–Glu517. The N-linked (GlcNAc...) asparagine glycan is linked to Asn303. 2 N-linked (GlcNAc...) asparagine glycosylation sites follow: Asn363 and Asn380. 10 cysteine pairs are disulfide-bonded: Cys381/Cys390, Cys393/Cys411, Cys414/Cys426, Cys416/Cys442, Cys444/Cys453, Cys456/Cys466, Cys469/Cys482, Cys471/Cys486, Cys488/Cys497, and Cys500/Cys515. An N-linked (GlcNAc...) asparagine glycan is attached at Asn470. The region spanning Cys518 to Cys527 is the Laminin EGF-like 5; first part domain. One can recognise a Laminin IV type A 1 domain in the interval Tyr531 to Val723. The region spanning Cys724–Pro756 is the Laminin EGF-like 5; second part domain. N-linked (GlcNAc...) asparagine glycosylation is present at Asn746. Disulfide bonds link Cys757–Cys766, Cys759–Cys773, Cys776–Cys785, Cys788–Cys804, Cys807–Cys822, Cys809–Cys832, Cys835–Cys844, Cys847–Cys862, Cys865–Cys879, Cys867–Cys886, Cys889–Cys898, Cys901–Cys915, Cys918–Cys930, Cys920–Cys937, Cys939–Cys948, Cys951–Cys964, Cys967–Cys979, Cys969–Cys985, Cys987–Cys996, Cys999–Cys1011, Cys1014–Cys1023, Cys1016–Cys1030, Cys1032–Cys1041, Cys1044–Cys1057, Cys1060–Cys1072, Cys1062–Cys1079, Cys1081–Cys1090, Cys1093–Cys1103, Cys1106–Cys1118, Cys1108–Cys1134, Cys1136–Cys1145, and Cys1148–Cys1163. Laminin EGF-like domains follow at residues Cys757 to Pro806, Cys807 to Pro864, Cys865 to Pro917, Cys918 to Pro966, Cys967 to Ala1013, Cys1014 to Ala1059, Cys1060 to Leu1105, and Cys1106 to Ser1165. The N-linked (GlcNAc...) asparagine glycan is linked to Asn1061. Positions Cys1166 to Cys1175 constitute a Laminin EGF-like 14; first part domain. The Laminin IV type A 2 domain occupies Ser1176–Lys1379. The 40-residue stretch at Cys1380–Pro1419 folds into the Laminin EGF-like 14; second part domain. Cystine bridges form between Cys1420–Cys1429, Cys1422–Cys1436, Cys1439–Cys1448, Cys1451–Cys1466, Cys1469–Cys1484, Cys1471–Cys1494, Cys1497–Cys1506, Cys1509–Cys1524, Cys1527–Cys1539, Cys1529–Cys1546, Cys1548–Cys1557, and Cys1560–Cys1571. 3 Laminin EGF-like domains span residues Cys1420–Gln1468, Cys1469–Glu1526, and Cys1527–Phe1573. Positions Cys1574–Ile2144 are domain II and I. N-linked (GlcNAc...) asparagine glycosylation is found at Asn1597, Asn1614, Asn1700, Asn1810, Asn1901, Asn1916, Asn1920, Asn2017, Asn2028, Asn2045, Asn2126, and Asn2240. Residues Glu1630–Ser2150 adopt a coiled-coil conformation. 5 consecutive Laminin G-like domains span residues Lys2145–Cys2328, Thr2340–Cys2521, Val2526–Cys2710, Ser2763–Cys2934, and Gln2939–Glu3110. A disulfide bond links Cys2302 and Cys2328. 3 N-linked (GlcNAc...) asparagine glycosylation sites follow: Asn2360, Asn2435, and Asn2478. Residues Cys2495 and Cys2521 are joined by a disulfide bond. N-linked (GlcNAc...) asparagine glycosylation is found at Asn2551, Asn2558, and Asn2648. A disulfide bridge connects residues Cys2683 and Cys2710. N-linked (GlcNAc...) asparagine glycosylation is found at Asn2868 and Asn2893. An intrachain disulfide couples Cys2909 to Cys2934. Residues Gly3043–Thr3060 are compositionally biased toward polar residues. The interval Gly3043–Pro3063 is disordered.

Laminin is a complex glycoprotein, consisting of three different polypeptide chains (alpha, beta, gamma), which are bound to each other by disulfide bonds into a cross-shaped molecule comprising one long and three short arms with globules at each end. Alpha-2 is a subunit of laminin-2 (laminin-211 or merosin), laminin-4 (laminin-221 or S-merosin) and laminin-12 (laminin-213). Interacts with FBLN1, FBLN2 and NID2. Placenta, striated muscle, peripheral nerve, cardiac muscle, pancreas, lung, spleen, kidney, adrenal gland, skin, testis, meninges, choroid plexus, and some other regions of the brain; not in liver, thymus and bone.

The protein resides in the secreted. The protein localises to the extracellular space. It is found in the extracellular matrix. Its subcellular location is the basement membrane. Binding to cells via a high affinity receptor, laminin is thought to mediate the attachment, migration and organization of cells into tissues during embryonic development by interacting with other extracellular matrix components. The protein is Laminin subunit alpha-2 (LAMA2) of Homo sapiens (Human).